Consider the following 127-residue polypeptide: Fluoride-specific ion channel FluC (127 aa).

Helical transmembrane passes span 37–57, 68–88, and 102–122; these read TSFV…WLAL, LFLA…SLEV, and LYAG…LWMA. Residues glycine 76 and threonine 79 each contribute to the Na(+) site.

It belongs to the fluoride channel Fluc/FEX (TC 1.A.43) family.

Its subcellular location is the cell inner membrane. The enzyme catalyses fluoride(in) = fluoride(out). With respect to regulation, na(+) is not transported, but it plays an essential structural role and its presence is essential for fluoride channel function. Its function is as follows. Fluoride-specific ion channel. Important for reducing fluoride concentration in the cell, thus reducing its toxicity. This Hyphomonas neptunium (strain ATCC 15444) protein is Fluoride-specific ion channel FluC.